Here is a 339-residue protein sequence, read N- to C-terminus: Ribosomal RNA small subunit methyltransferase H (339 aa).

Residues 36 to 38 (GGY), Asp55, Phe82, Asp103, and Gln110 each bind S-adenosyl-L-methionine. The disordered stretch occupies residues 286 to 319 (GPIGPSEAEATANPRARSAKLRAGERTDAPIPEP).

This sequence belongs to the methyltransferase superfamily. RsmH family.

The protein localises to the cytoplasm. The enzyme catalyses cytidine(1402) in 16S rRNA + S-adenosyl-L-methionine = N(4)-methylcytidine(1402) in 16S rRNA + S-adenosyl-L-homocysteine + H(+). Functionally, specifically methylates the N4 position of cytidine in position 1402 (C1402) of 16S rRNA. This Methylobacterium nodulans (strain LMG 21967 / CNCM I-2342 / ORS 2060) protein is Ribosomal RNA small subunit methyltransferase H.